The following is a 448-amino-acid chain: Rhodanese-like domain-containing protein 8, chloroplastic (448 aa).

The N-terminal 23 residues, 1-23 (MRVSPAATLSVSLTTPLPITLTK), are a transit peptide targeting the chloroplast. In terms of domain architecture, Rhodanese spans 220–323 (SGKSYILLDV…YLKEEGTAEW (104 aa)). Cys283 functions as the Cysteine persulfide intermediate in the catalytic mechanism.

Its subcellular location is the plastid. It localises to the chloroplast. The protein is Rhodanese-like domain-containing protein 8, chloroplastic (STR8) of Arabidopsis thaliana (Mouse-ear cress).